Reading from the N-terminus, the 339-residue chain is Biotin synthase (339 aa).

Residues 55–288 form the Radical SAM core domain; sequence LSEGALHSCS…GKIIKFAAGR (234 aa). Residues Cys73, Cys77, and Cys80 each contribute to the [4Fe-4S] cluster site. Positions 152, 213, and 283 each coordinate [2Fe-2S] cluster.

The protein belongs to the radical SAM superfamily. Biotin synthase family. As to quaternary structure, homodimer. [4Fe-4S] cluster is required as a cofactor. Requires [2Fe-2S] cluster as cofactor.

It catalyses the reaction (4R,5S)-dethiobiotin + (sulfur carrier)-SH + 2 reduced [2Fe-2S]-[ferredoxin] + 2 S-adenosyl-L-methionine = (sulfur carrier)-H + biotin + 2 5'-deoxyadenosine + 2 L-methionine + 2 oxidized [2Fe-2S]-[ferredoxin]. Its pathway is cofactor biosynthesis; biotin biosynthesis; biotin from 7,8-diaminononanoate: step 2/2. Functionally, catalyzes the conversion of dethiobiotin (DTB) to biotin by the insertion of a sulfur atom into dethiobiotin via a radical-based mechanism. The polypeptide is Biotin synthase (Chlorobium phaeobacteroides (strain BS1)).